Here is a 728-residue protein sequence, read N- to C-terminus: 1,4-alpha-glucan branching enzyme GlgB (728 aa).

Residue Asp405 is the Nucleophile of the active site. Glu458 acts as the Proton donor in catalysis.

This sequence belongs to the glycosyl hydrolase 13 family. GlgB subfamily. In terms of assembly, monomer.

The enzyme catalyses Transfers a segment of a (1-&gt;4)-alpha-D-glucan chain to a primary hydroxy group in a similar glucan chain.. It participates in glycan biosynthesis; glycogen biosynthesis. Catalyzes the formation of the alpha-1,6-glucosidic linkages in glycogen by scission of a 1,4-alpha-linked oligosaccharide from growing alpha-1,4-glucan chains and the subsequent attachment of the oligosaccharide to the alpha-1,6 position. In Escherichia coli O139:H28 (strain E24377A / ETEC), this protein is 1,4-alpha-glucan branching enzyme GlgB.